A 134-amino-acid chain; its full sequence is Holo-[acyl-carrier-protein] synthase (134 aa).

Mg(2+) contacts are provided by Asp-8 and Glu-58.

Belongs to the P-Pant transferase superfamily. AcpS family. Mg(2+) is required as a cofactor.

Its subcellular location is the cytoplasm. The catalysed reaction is apo-[ACP] + CoA = holo-[ACP] + adenosine 3',5'-bisphosphate + H(+). Its function is as follows. Transfers the 4'-phosphopantetheine moiety from coenzyme A to a Ser of acyl-carrier-protein. This Ruminiclostridium cellulolyticum (strain ATCC 35319 / DSM 5812 / JCM 6584 / H10) (Clostridium cellulolyticum) protein is Holo-[acyl-carrier-protein] synthase.